We begin with the raw amino-acid sequence, 217 residues long: tRNA (guanine-N(7)-)-methyltransferase (217 aa).

E45, E70, D97, and D119 together coordinate S-adenosyl-L-methionine. The active site involves D119. Substrate is bound at residue K123. An interaction with RNA region spans residues R125 to R130. Residues D155 and T195–E198 each bind substrate.

Belongs to the class I-like SAM-binding methyltransferase superfamily. TrmB family.

The catalysed reaction is guanosine(46) in tRNA + S-adenosyl-L-methionine = N(7)-methylguanosine(46) in tRNA + S-adenosyl-L-homocysteine. It functions in the pathway tRNA modification; N(7)-methylguanine-tRNA biosynthesis. Its function is as follows. Catalyzes the formation of N(7)-methylguanine at position 46 (m7G46) in tRNA. This Lactobacillus helveticus (strain DPC 4571) protein is tRNA (guanine-N(7)-)-methyltransferase.